Here is a 129-residue protein sequence, read N- to C-terminus: Lysozyme C (129 aa).

The 129-residue stretch at 1–129 folds into the C-type lysozyme domain; the sequence is KVYGRCELAA…VHAWIRGCRL (129 aa). 4 disulfides stabilise this stretch: Cys-6–Cys-127, Cys-30–Cys-115, Cys-64–Cys-80, and Cys-76–Cys-94. Residues Glu-35 and Asp-52 contribute to the active site.

Belongs to the glycosyl hydrolase 22 family. Monomer.

It is found in the secreted. It carries out the reaction Hydrolysis of (1-&gt;4)-beta-linkages between N-acetylmuramic acid and N-acetyl-D-glucosamine residues in a peptidoglycan and between N-acetyl-D-glucosamine residues in chitodextrins.. Functionally, lysozymes have primarily a bacteriolytic function; those in tissues and body fluids are associated with the monocyte-macrophage system and enhance the activity of immunoagents. The chain is Lysozyme C (LYZ) from Lophophorus impejanus (Himalayan monal pheasant).